A 374-amino-acid chain; its full sequence is Beta-lytic metalloendopeptidase (374 aa).

Residues 1 to 24 (MKKISKAGLGLALVCALATIGGNA) form the signal peptide. Positions 25–195 (ARRATAQRRG…RQGRPGRAAV (171 aa)) are excised as a propeptide. Residues 128-187 (PTRQGAGDAGPRQSAAGAVRAFRRQRAGGRAARRRRVPAGLRPPVQRTAPGQGGFGPLRQ) form a disordered region. The span at 148–164 (AFRRQRAGGRAARRRRV) shows a compositional bias: basic residues. A disulfide bridge links Cys-261 with Cys-307. The Zn(2+) site is built by His-316 and His-318. Cysteines 351 and 364 form a disulfide.

The protein belongs to the peptidase M23A family. The cofactor is Zn(2+).

Its subcellular location is the secreted. It carries out the reaction Cleavage of N-acetylmuramoyl-|-Ala, and of the insulin B chain at 23-Gly-|-Phe-24 &gt; 18-Val-|-Cys(SO3H).. This is Beta-lytic metalloendopeptidase from Achromobacter lyticus.